We begin with the raw amino-acid sequence, 292 residues long: Probable endonuclease 4 (292 aa).

Residues H70, H111, E146, D180, H183, H215, D228, H230, and E260 each coordinate Zn(2+).

The protein belongs to the AP endonuclease 2 family. The cofactor is Zn(2+).

The catalysed reaction is Endonucleolytic cleavage to 5'-phosphooligonucleotide end-products.. Functionally, endonuclease IV plays a role in DNA repair. It cleaves phosphodiester bonds at apurinic or apyrimidinic (AP) sites, generating a 3'-hydroxyl group and a 5'-terminal sugar phosphate. This chain is Probable endonuclease 4, found in Shouchella clausii (strain KSM-K16) (Alkalihalobacillus clausii).